Consider the following 877-residue polypeptide: MENKDRLLLIDGSSVAFRAFFALYNQIDRFKAPNGLHTNAIFAFHTMLSSLMERIEPTHVLIAFDAGKTTFRTEMFADYKGGRSKTPDEFREQLPFIKEMIEKLGIRHYELANYEADDIIGTLDKMAEAPNVNFDVTIVTGDKDMIQLVDGNTRVEISKKGVAEFEEFTPDYLLEKMGLTPAQFIDLKALMGDSSDNYPGVTKVGEKTGLKLLQEFGSLENLYENVDSLKASKMKENLIADKEMAFLSQQLATINTKAPIEIGLDDTLLKGKKVDELSQFYDEMGFAQFKSKLLAEAGGEVTDEKVVDEIDFEIVTDGSISEKVNADDFFYLETLGENYHREQIVAFAWGNAEKIYVSKNIDLLTKMKFPENTYDFKKNRVLLSHLDIELPLVKFDAMLAKYLISTTEDNKISTIARLFNSGHLATDEEIFGKGTKIALPDDAVLFEHLARKIKVLALAKEKMMAELLENEQEHLLSDMELPLAEVLAKMEITGIAVSQNTLEEIGAENEEKLASLTREIYDLAGEEFNINSPKQLGVILFEKLQLPVGKKTKTGYSTAVDVLEDLAALSPVVAKILEYRQINKVQSTYVKGLIPQIADDGKIHTRYVQDLTQTGRLSSVDPNLQNIPVRLEEGRKIRKAFVPSKDSLLLSSDYSQIELRVLAHISGDEHLIDAFKHGADIHTSTAMRVFGIEKAEDVTANDRRNAKAVNFGVVYGISDFGLARNLGITRKDAKNYIETYFERYPGIKTYMENIVREARDKGFVETMSHRRRKIPDINARNFNVRGFAERTAINSPIQGSAADILKIAMINLDKALSARDFKSKLLLQVHDEIILDVPLEELDEIKVLVKQTMEEAIELAVPLKVDENTGKTWYEAK.

The 5'-3' exonuclease domain maps to 180 to 270 (TPAQFIDLKA…EIGLDDTLLK (91 aa)). The 161-residue stretch at 308–468 (DEIDFEIVTD…AKEKMMAELL (161 aa)) folds into the 3'-5' exonuclease domain.

Belongs to the DNA polymerase type-A family. Single-chain monomer with multiple functions.

The catalysed reaction is DNA(n) + a 2'-deoxyribonucleoside 5'-triphosphate = DNA(n+1) + diphosphate. In addition to polymerase activity, this DNA polymerase exhibits 3'-5' and 5'-3' exonuclease activity. The chain is DNA polymerase I (polA) from Lactococcus lactis subsp. lactis (strain IL1403) (Streptococcus lactis).